A 448-amino-acid chain; its full sequence is Methionine aminopeptidase 2 (448 aa).

Residues 1–94 (MAAQVTDALK…PRVLLSNLFP (94 aa)) form a disordered region. Acidic residues predominate over residues 37 to 50 (AEAEDSDDDDEEPV). The span at 61 to 74 (KKKRKRKKKPKKKA) shows a compositional bias: basic residues. Histidine 201 lines the substrate pocket. Positions 221, 232, and 301 each coordinate a divalent metal cation. Residue histidine 309 participates in substrate binding. Residues glutamate 334 and glutamate 429 each contribute to the a divalent metal cation site.

This sequence belongs to the peptidase M24A family. Methionine aminopeptidase eukaryotic type 2 subfamily. Co(2+) serves as cofactor. The cofactor is Zn(2+). Mn(2+) is required as a cofactor. Requires Fe(2+) as cofactor.

Its subcellular location is the cytoplasm. It catalyses the reaction Release of N-terminal amino acids, preferentially methionine, from peptides and arylamides.. Functionally, cotranslationally removes the N-terminal methionine from nascent proteins. The N-terminal methionine is often cleaved when the second residue in the primary sequence is small and uncharged (Met-Ala-, Cys, Gly, Pro, Ser, Thr, or Val). This chain is Methionine aminopeptidase 2, found in Botryotinia fuckeliana (strain B05.10) (Noble rot fungus).